A 360-amino-acid chain; its full sequence is Iron uptake protein A1 (360 aa).

The signal sequence occupies residues 1–28 (MVQKLSRRLFLSIGTAFTVVVGSQLLSS). The N-palmitoyl cysteine moiety is linked to residue cysteine 29. A lipid anchor (S-diacylglycerol cysteine) is attached at cysteine 29. Histidine 54, tyrosine 55, tyrosine 185, tyrosine 241, and tyrosine 242 together coordinate Fe cation.

Belongs to the bacterial solute-binding protein 1 family.

Its subcellular location is the cellular thylakoid membrane. The protein localises to the cell membrane. Functionally, plays an important role in protecting the acceptor side of photosystem II (PSII) against oxidative damage, especially under iron-limiting growth conditions. The differing subcellular locations of futA1 (predominantly thylakoid lumen) and futA2 (predominantly periplasmic) suggest they may fulfill different roles. A major iron-binding protein involved in Fe(3+) uptake, probably part of a periplasmic ABC transporter complex futA1A2BC (TC 3.A.1.10.2) involved in Fe(3+) ion import (ferric iron). This protein and futA2 (slr0531) may be subunit proteins that have redundant or overlapping substrate-binding functions. This Synechocystis sp. (strain ATCC 27184 / PCC 6803 / Kazusa) protein is Iron uptake protein A1 (futA1).